Here is a 377-residue protein sequence, read N- to C-terminus: Chaperone protein DnaJ (377 aa).

Residues 6–70 form the J domain; that stretch reads DYYKILGIDK…EKKAIYDKYG (65 aa). The CR-type zinc finger occupies 143-225; that stretch reads GRVISQKLDK…CKGAKKIKES (83 aa). Positions 156, 159, 173, 176, 199, 202, 213, and 216 each coordinate Zn(2+). CXXCXGXG motif repeat units lie at residues 156–163, 173–180, 199–206, and 213–220; these read CESCNGTG, CSTCNGRG, CSTCNGLG, and CPSCKGAK.

It belongs to the DnaJ family. In terms of assembly, homodimer. Zn(2+) serves as cofactor.

The protein localises to the cytoplasm. Participates actively in the response to hyperosmotic and heat shock by preventing the aggregation of stress-denatured proteins and by disaggregating proteins, also in an autonomous, DnaK-independent fashion. Unfolded proteins bind initially to DnaJ; upon interaction with the DnaJ-bound protein, DnaK hydrolyzes its bound ATP, resulting in the formation of a stable complex. GrpE releases ADP from DnaK; ATP binding to DnaK triggers the release of the substrate protein, thus completing the reaction cycle. Several rounds of ATP-dependent interactions between DnaJ, DnaK and GrpE are required for fully efficient folding. Also involved, together with DnaK and GrpE, in the DNA replication of plasmids through activation of initiation proteins. This chain is Chaperone protein DnaJ, found in Mycoplasmopsis pulmonis (strain UAB CTIP) (Mycoplasma pulmonis).